A 265-amino-acid polypeptide reads, in one-letter code: MNRITETFDRLAAKKEKALVGFVTAGDPAIETSEAIIRAMCEAGIDILELGVPFSDPTADGPVIQRSSQRALANGTNLQTVFDMTATLRKTFQGPIILFSYYNPIFRYGAENFYRDAKQAGADGVLVVDLPPEESAELTSCWKGDDFALIRLLAPTTPDGRIGAIAASASGFLYLVSMTGVTGSSGLDTTHIADLCAKVQRHTALPICVGFGVSTADDVAKIAQHADGVVIGSAFERLIEESIGKPDIAGILAERTREYKAATKM.

Residues glutamate 49 and aspartate 60 each act as proton acceptor in the active site.

Belongs to the TrpA family. As to quaternary structure, tetramer of two alpha and two beta chains.

The catalysed reaction is (1S,2R)-1-C-(indol-3-yl)glycerol 3-phosphate + L-serine = D-glyceraldehyde 3-phosphate + L-tryptophan + H2O. Its pathway is amino-acid biosynthesis; L-tryptophan biosynthesis; L-tryptophan from chorismate: step 5/5. Its function is as follows. The alpha subunit is responsible for the aldol cleavage of indoleglycerol phosphate to indole and glyceraldehyde 3-phosphate. This is Tryptophan synthase alpha chain from Desulfosudis oleivorans (strain DSM 6200 / JCM 39069 / Hxd3) (Desulfococcus oleovorans).